Consider the following 110-residue polypeptide: Iron-sulfur cluster assembly protein CyaY (110 aa).

Belongs to the frataxin family.

Its function is as follows. Involved in iron-sulfur (Fe-S) cluster assembly. May act as a regulator of Fe-S biogenesis. This Pseudomonas fluorescens (strain ATCC BAA-477 / NRRL B-23932 / Pf-5) protein is Iron-sulfur cluster assembly protein CyaY.